Reading from the N-terminus, the 122-residue chain is Chorismate mutase AroH (122 aa).

Residues 2–120 (VRGIRGAITV…AVRLRPDLES (119 aa)) enclose the Chorismate mutase aroH-type domain. Residues Arg6, Arg89, and Tyr107 each coordinate prephenate.

In terms of assembly, homotrimer.

It localises to the cytoplasm. It catalyses the reaction chorismate = prephenate. The protein operates within metabolic intermediate biosynthesis; prephenate biosynthesis; prephenate from chorismate: step 1/1. Its activity is regulated as follows. Inhibited by 40% with 500 uM tyrosine, and a tyrosine concentration as high as 5 mM reduced activity to 5%. Catalyzes the Claisen rearrangement of chorismate to prephenate. Probably involved in the aromatic amino acid biosynthesis. The chain is Chorismate mutase AroH from Thermus thermophilus.